Consider the following 460-residue polypeptide: 1-aminocyclopropane-1-carboxylate synthase 11 (460 aa).

Glu45 and Tyr83 together coordinate substrate. The residue at position 267 (Lys267) is an N6-(pyridoxal phosphate)lysine.

Belongs to the class-I pyridoxal-phosphate-dependent aminotransferase family. In terms of assembly, homodimer and heterodimer. In vivo, the relevance of heterodimerization with other ACS enzymes is however unsure. Interacts with GRF3. Pyridoxal 5'-phosphate serves as cofactor. In terms of processing, may be processed at its C-terminus. As to expression, expressed in roots.

It catalyses the reaction S-adenosyl-L-methionine = 1-aminocyclopropane-1-carboxylate + S-methyl-5'-thioadenosine + H(+). It participates in alkene biosynthesis; ethylene biosynthesis via S-adenosyl-L-methionine; ethylene from S-adenosyl-L-methionine: step 1/2. In terms of biological role, 1-aminocyclopropane-1-carboxylate synthase (ACS) enzymes catalyze the conversion of S-adenosyl-L-methionine (SAM) into 1-aminocyclopropane-1-carboxylate (ACC), a direct precursor of ethylene. The protein is 1-aminocyclopropane-1-carboxylate synthase 11 (ACS11) of Arabidopsis thaliana (Mouse-ear cress).